Here is a 250-residue protein sequence, read N- to C-terminus: Lymphotoxin-beta (250 aa).

At 1–26 the chain is on the cytoplasmic side; sequence MGAPGLETRAGGPNGKSYLLLASVGA. A helical; Signal-anchor for type II membrane protein transmembrane segment spans residues 27-47; that stretch reads AVLGTLLLSVPITVLTVLALM. Residues 48 to 250 are Extracellular-facing; the sequence is PQEQGGQVAD…KTFFGAVMVG (203 aa). Positions 87–249 constitute a THD domain; sequence PAAHLIGIAK…GKTFFGAVMV (163 aa). N228 is a glycosylation site (N-linked (GlcNAc...) asparagine).

Belongs to the tumor necrosis factor family. Heterotrimer of either two LTB and one LTA subunits or (less prevalent) two LTA and one LTB subunits.

The protein localises to the membrane. Cytokine that binds to LTBR/TNFRSF3. May play a specific role in immune response regulation. Provides the membrane anchor for the attachment of the heterotrimeric complex to the cell surface. This is Lymphotoxin-beta (LTB) from Notamacropus eugenii (Tammar wallaby).